Consider the following 215-residue polypeptide: Protein-L-isoaspartate O-methyltransferase (215 aa).

Residue Ser62 is part of the active site.

Belongs to the methyltransferase superfamily. L-isoaspartyl/D-aspartyl protein methyltransferase family.

It is found in the cytoplasm. The catalysed reaction is [protein]-L-isoaspartate + S-adenosyl-L-methionine = [protein]-L-isoaspartate alpha-methyl ester + S-adenosyl-L-homocysteine. Functionally, catalyzes the methyl esterification of L-isoaspartyl residues in peptides and proteins that result from spontaneous decomposition of normal L-aspartyl and L-asparaginyl residues. It plays a role in the repair and/or degradation of damaged proteins. The protein is Protein-L-isoaspartate O-methyltransferase of Nitratidesulfovibrio vulgaris (strain DSM 19637 / Miyazaki F) (Desulfovibrio vulgaris).